The sequence spans 326 residues: Thioredoxin reductase (326 aa).

55–62 is a binding site for FAD; it reads EGPEPGGQ. C156 and C159 are oxidised to a cystine. 298 to 307 provides a ligand contact to FAD; the sequence is DVSNKLYAQA.

Belongs to the class-II pyridine nucleotide-disulfide oxidoreductase family. Homodimer. Requires FAD as cofactor.

It localises to the cytoplasm. The enzyme catalyses [thioredoxin]-dithiol + NADP(+) = [thioredoxin]-disulfide + NADPH + H(+). This is Thioredoxin reductase (trxB) from Borreliella burgdorferi (strain ATCC 35210 / DSM 4680 / CIP 102532 / B31) (Borrelia burgdorferi).